The sequence spans 333 residues: Delta(9)-fatty-acid desaturase fat-5 (333 aa).

The next 4 membrane-spanning stretches (helical) occupy residues 42–62 (NVALFVALHIGALVGLYQLVF), 66–86 (WATVGWVFLLHTLGSMGVTGG), 187–207 (LPLVGIFCFALPTFIPVVLWG), and 210–230 (AFIAFYTAALFRYCFTLHATW).

It belongs to the fatty acid desaturase type 1 family. As to expression, expressed in the intestine in adult worms and in all four larval stages. Additional expression in the pharynx and tail cells after hatching and throughout the lifespan.

The protein localises to the membrane. It catalyses the reaction hexadecanoyl-CoA + 2 Fe(II)-[cytochrome b5] + O2 + 2 H(+) = (9Z)-hexadecenoyl-CoA + 2 Fe(III)-[cytochrome b5] + 2 H2O. The enzyme catalyses tetradecanoyl-CoA + 2 Fe(II)-[cytochrome b5] + O2 + 2 H(+) = (9Z)-tetradecenoyl-CoA + 2 Fe(III)-[cytochrome b5] + 2 H2O. It carries out the reaction heptadecanoyl-CoA + 2 Fe(II)-[cytochrome b5] + O2 + 2 H(+) = (9Z)-heptadecenoyl-CoA + 2 Fe(III)-[cytochrome b5] + 2 H2O. The catalysed reaction is pentadecanoyl-CoA + 2 Fe(II)-[cytochrome b5] + O2 + 2 H(+) = (9Z)-pentadecenoyl-CoA + 2 Fe(III)-[cytochrome b5] + 2 H2O. It participates in lipid metabolism; monounsaturated fatty acid biosynthesis. In terms of biological role, delta(9)-fatty acid desaturase that acts preferentially on palmitoyl-CoA (hexadecanoyl-CoA) producing the monounsaturated palmitoleoyl-CoA ((9Z)-hexadecenoyl-CoA), which can be elongated to (11Z)-octadecenoyl-CoA (the most abundant monounsaturated fatty acid in Caenorhabditis elegans phospholipids and triacylglycerols). Also acts on pentadecanoyl-CoA, heptadecanoyl-CoA and myristoyl-CoA (tetradecanoyl-CoA), the monounsaturated fatty acids (MUFAs) produced are further used as substrates to synthesize polyunsaturated fatty acids (PUFAs) by several other desaturases and elongases. Unlike plants, Caenorhabditis elegans desaturases seem to use fatty acyl-CoAs as substrates. The chain is Delta(9)-fatty-acid desaturase fat-5 (fat-5) from Caenorhabditis elegans.